A 106-amino-acid polypeptide reads, in one-letter code: DNA-directed RNA polymerase subunit Rpo6 (106 aa).

It belongs to the archaeal Rpo6/eukaryotic RPB6 RNA polymerase subunit family. In terms of assembly, part of the RNA polymerase complex.

The protein localises to the cytoplasm. The catalysed reaction is RNA(n) + a ribonucleoside 5'-triphosphate = RNA(n+1) + diphosphate. In terms of biological role, DNA-dependent RNA polymerase (RNAP) catalyzes the transcription of DNA into RNA using the four ribonucleoside triphosphates as substrates. This chain is DNA-directed RNA polymerase subunit Rpo6, found in Pyrobaculum aerophilum (strain ATCC 51768 / DSM 7523 / JCM 9630 / CIP 104966 / NBRC 100827 / IM2).